The primary structure comprises 424 residues: Histone-binding protein RBBP7 (424 aa).

WD repeat units lie at residues 47-121 (QWLP…KINH), 127-172 (RARY…LRLR), 180-216 (GLSW…KIVD), 227-268 (VVED…HSVD), 274-311 (VNCL…LHSF), 317-368 (EIFQ…LFIH), and 375-402 (ISDF…IWQM). An interaction with HAT1 region spans residues 359–404 (DGPPELLFIHGGHTAKISDFSWNPNEPWVICSVSEDNIMQIWQMAE).

This sequence belongs to the WD repeat RBAP46/RBAP48/MSI1 family. In terms of assembly, binds directly to helix 1 of the histone fold of histone H4, a region that is not accessible when H4 is in chromatin. Also interacts with histone H2B and HAT1.

The protein localises to the nucleus. Its function is as follows. Core histone-binding subunit that may target chromatin remodeling factors, histone acetyltransferases and histone deacetylases to their histone substrates in a manner that is regulated by nucleosomal DNA. Component of several complexes which regulate chromatin metabolism. The protein is Histone-binding protein RBBP7 (RBBP7) of Gallus gallus (Chicken).